Reading from the N-terminus, the 303-residue chain is Oxygen-dependent coproporphyrinogen-III oxidase (303 aa).

Ser93 is a substrate binding site. The a divalent metal cation site is built by His97 and His107. His107 (proton donor) is an active-site residue. Substrate is bound at residue 109–111; sequence NVR. A divalent metal cation contacts are provided by His146 and His176. Residues 241 to 276 are important for dimerization; sequence YVEFNLVYDRGTLFGLQSGGRTESILMSLPPQVRWG. 259 to 261 contacts substrate; that stretch reads GGR.

This sequence belongs to the aerobic coproporphyrinogen-III oxidase family. As to quaternary structure, homodimer. The cofactor is a divalent metal cation.

The protein resides in the cytoplasm. The enzyme catalyses coproporphyrinogen III + O2 + 2 H(+) = protoporphyrinogen IX + 2 CO2 + 2 H2O. It participates in porphyrin-containing compound metabolism; protoporphyrin-IX biosynthesis; protoporphyrinogen-IX from coproporphyrinogen-III (O2 route): step 1/1. In terms of biological role, involved in the heme biosynthesis. Catalyzes the aerobic oxidative decarboxylation of propionate groups of rings A and B of coproporphyrinogen-III to yield the vinyl groups in protoporphyrinogen-IX. The sequence is that of Oxygen-dependent coproporphyrinogen-III oxidase from Pseudomonas entomophila (strain L48).